Here is a 220-residue protein sequence, read N- to C-terminus: Flavin-dependent thymidylate synthase (220 aa).

Residues 1 to 208 enclose the ThyX domain; sequence MKIDILDKGF…PWTFEAFLKY (208 aa). FAD contacts are provided by residues Thr55, 78–80, and Glu86; that span reads RHR. DUMP-binding positions include 75-78, 86-90, and Arg147; these read QWFR and ELSGR. A ThyX motif motif is present at residues 78 to 88; sequence RHRIASYNELS. FAD contacts are provided by residues 163-165 and Asn169; that span reads NAR. Arg174 is a dUMP binding site. The active-site Involved in ionization of N3 of dUMP, leading to its activation is Arg174.

The protein belongs to the thymidylate synthase ThyX family. In terms of assembly, homotetramer. FAD serves as cofactor.

The enzyme catalyses dUMP + (6R)-5,10-methylene-5,6,7,8-tetrahydrofolate + NADPH + H(+) = dTMP + (6S)-5,6,7,8-tetrahydrofolate + NADP(+). It functions in the pathway pyrimidine metabolism; dTTP biosynthesis. Its function is as follows. Catalyzes the reductive methylation of 2'-deoxyuridine-5'-monophosphate (dUMP) to 2'-deoxythymidine-5'-monophosphate (dTMP) while utilizing 5,10-methylenetetrahydrofolate (mTHF) as the methyl donor, and NADPH and FADH(2) as the reductant. The protein is Flavin-dependent thymidylate synthase of Thermotoga sp. (strain RQ2).